Here is a 142-residue protein sequence, read N- to C-terminus: Neurofilament heavy polypeptide (142 aa).

The IF rod domain maps to 1–142 (MRGAVLRLGA…EAAKVNTDAM (142 aa)). Residues 26–74 (IAHVRQRLDDEARQRQEAEAAARALARFAQEAEAARVELQKKAQALQEE) adopt a coiled-coil conformation.

It belongs to the intermediate filament family. As to quaternary structure, forms heterodimers with NEFL; which can further hetero-oligomerize (in vitro). Forms heterodimers with INA (in vitro). There are a number of repeats of the tripeptide K-S-P, NFH is phosphorylated on a number of the serines in this motif. It is thought that phosphorylation of NFH results in the formation of interfilament cross bridges that are important in the maintenance of axonal caliber. In terms of processing, phosphorylation seems to play a major role in the functioning of the larger neurofilament polypeptides (NF-M and NF-H), the levels of phosphorylation being altered developmentally and coincidentally with a change in the neurofilament function. Post-translationally, phosphorylated in the head and rod regions by the PKC kinase PKN1, leading to the inhibition of polymerization.

It localises to the cytoplasm. The protein resides in the cytoskeleton. It is found in the cell projection. Its subcellular location is the axon. Functionally, neurofilaments usually contain three intermediate filament proteins: NEFL, NEFM, and NEFH which are involved in the maintenance of neuronal caliber. NEFH has an important function in mature axons that is not subserved by the two smaller NF proteins. May additionally cooperate with the neuronal intermediate filament proteins PRPH and INA to form neuronal filamentous networks. This Sus scrofa (Pig) protein is Neurofilament heavy polypeptide (NEFH).